The following is a 268-amino-acid chain: Indole-3-glycerol phosphate synthase (268 aa).

It belongs to the TrpC family.

The catalysed reaction is 1-(2-carboxyphenylamino)-1-deoxy-D-ribulose 5-phosphate + H(+) = (1S,2R)-1-C-(indol-3-yl)glycerol 3-phosphate + CO2 + H2O. Its pathway is amino-acid biosynthesis; L-tryptophan biosynthesis; L-tryptophan from chorismate: step 4/5. This Acinetobacter baumannii (strain AB0057) protein is Indole-3-glycerol phosphate synthase.